The chain runs to 447 residues: MEMGNQHPSISRLQEIQKEVKSIEQQVLGFSGLSDDKNYKKLERILTKQLFEIDSVDTEGKGDIQQARKRAAQETERLLKELEQNANHPHRLEIQNIFQEAQALVKEKVVPFYNGGNCVTDEFEEGIQDVILRLTHVKTGGKVSLRKARYHTLTKICAVQEIIENCMKKQPSLPLSEDAHPSVAKINSVMCEVNKTRGTLIALLMGVNNKETCRHLSCVLSGLMADLDALDVCGHTEIRNYRKEVVEDINQLLRYLDLEEEADTTHAFDLGQNHSILKIEKVLKRMREIKTELLQAQNPPELYLSAKTELQGLIGQLDEVSLEKNPCIREARRRAVIEVQTLITYIDLKEALEKRKLLACEEHPSHKAVWDVLGNLSEIQGEVLSFDGNRTDKNYIRLEELLTKQLLALDAVDPQGEEKCKAARKQAVKLAQNILSYLDLKSDEWEY.

5 BAG domains span residues 9-86, 95-167, 182-260, 275-350, and 365-442; these read SISR…EQNA, QNIF…ENCM, SVAK…DLEE, SILK…DLKE, and SHKA…DLKS.

As to quaternary structure, binds to the ATPase domain of HSP/HSP70 chaperones. Binds PRKN. Interacts complex with HSPA8 and JPH2.

Co-chaperone for HSP/HSP70 proteins. It functions as a nucleotide-exchange factor promoting the release of ADP from HSP70, thereby activating Hsp70-mediated protein refolding. Has an essential role in maintaining proteostasis at junctional membrane complexes (JMC), where it may function as a scaffold between the HSPA8 chaperone and JMC proteins enabling correct, HSPA8-dependent JMC protein folding. Inhibits both auto-ubiquitination of PRKN and ubiquitination of target proteins by PRKN. This chain is BAG family molecular chaperone regulator 5 (BAG5), found in Bos taurus (Bovine).